A 710-amino-acid chain; its full sequence is uncharacterized protein (710 aa).

Coiled coils occupy residues 273-298 and 477-528; these read LYRQ…MEEG and RYEK…VADT.

This is an uncharacterized protein from Coxiella burnetii (strain RSA 493 / Nine Mile phase I).